Reading from the N-terminus, the 232-residue chain is RNA chaperone ProQ (232 aa).

Residues 105-182 form a disordered region; sequence EAKARVQAQR…REEQHTPVSD (78 aa). Residues 117 to 136 are compositionally biased toward basic and acidic residues; that stretch reads QQAKKREAAAAAGEKEDAPR. Residues 137–146 are compositionally biased toward basic residues; the sequence is RERKPRPTTP. The span at 147 to 177 shows a compositional bias: basic and acidic residues; that stretch reads RRKEGAERKPRAQKSVEKAPKTVKAPREEQH.

This sequence belongs to the ProQ family.

The protein resides in the cytoplasm. RNA chaperone with significant RNA binding, RNA strand exchange and RNA duplexing activities. May regulate ProP activity through an RNA-based, post-transcriptional mechanism. The chain is RNA chaperone ProQ from Escherichia coli O7:K1 (strain IAI39 / ExPEC).